Reading from the N-terminus, the 61-residue chain is Protein YncO (61 aa).

Residues 18–38 form a helical membrane-spanning segment; it reads HVFLYVFYIFLFLVLFIMTIY.

It is found in the cell inner membrane. The sequence is that of Protein YncO from Escherichia coli (strain K12).